A 305-amino-acid polypeptide reads, in one-letter code: Phosphoribosylaminoimidazole-succinocarboxamide synthase (305 aa).

This sequence belongs to the SAICAR synthetase family.

It carries out the reaction 5-amino-1-(5-phospho-D-ribosyl)imidazole-4-carboxylate + L-aspartate + ATP = (2S)-2-[5-amino-1-(5-phospho-beta-D-ribosyl)imidazole-4-carboxamido]succinate + ADP + phosphate + 2 H(+). The protein operates within purine metabolism; IMP biosynthesis via de novo pathway; 5-amino-1-(5-phospho-D-ribosyl)imidazole-4-carboxamide from 5-amino-1-(5-phospho-D-ribosyl)imidazole-4-carboxylate: step 1/2. The polypeptide is Phosphoribosylaminoimidazole-succinocarboxamide synthase (Tropheryma whipplei (strain Twist) (Whipple's bacillus)).